Reading from the N-terminus, the 109-residue chain is Aquaporin-2 (109 aa).

Topologically, residues 1–6 (SIAFSR) are cytoplasmic. The helical transmembrane segment at 7–27 (AVFSEFLATLLFVFFGLGSAL) threads the bilayer. The Extracellular portion of the chain corresponds to 28–35 (NWPQALPS). Residues 36 to 54 (VLQIAMAFGLAIGTLVQAL) traverse the membrane as a helical segment. Topologically, residues 55-59 (GHISG) are cytoplasmic. The discontinuously helical intramembrane region spans 60–69 (AHINPAVTVA). The NPA 1 signature appears at 63–65 (NPA). The Cytoplasmic portion of the chain corresponds to 70–80 (CLVGCHVSFLR). The chain crosses the membrane as a helical span at residues 81-102 (ATFYLAAQLLGAVAGAAILHEI). Topologically, residues 103–109 (TPPDIRG) are extracellular.

This sequence belongs to the MIP/aquaporin (TC 1.A.8) family. In terms of assembly, homotetramer. Post-translationally, serine phosphorylation is necessary and sufficient for expression at the apical membrane. Endocytosis is not phosphorylation-dependent. N-glycosylated.

The protein localises to the apical cell membrane. It is found in the basolateral cell membrane. The protein resides in the cell membrane. Its subcellular location is the cytoplasmic vesicle membrane. It localises to the golgi apparatus. The protein localises to the trans-Golgi network membrane. The enzyme catalyses H2O(in) = H2O(out). It catalyses the reaction glycerol(in) = glycerol(out). In terms of biological role, forms a water-specific channel that provides the plasma membranes of renal collecting duct with high permeability to water, thereby permitting water to move in the direction of an osmotic gradient. Plays an essential role in renal water homeostasis. Could also be permeable to glycerol. This Dugong dugon (Dugong) protein is Aquaporin-2.